We begin with the raw amino-acid sequence, 210 residues long: Large ribosomal subunit protein uL3 (210 aa).

A compositionally biased stretch (basic residues) spans 132 to 144; that stretch reads GPMKHGSKYHRRP. The segment at 132–152 is disordered; that stretch reads GPMKHGSKYHRRPGSAGAKGP.

This sequence belongs to the universal ribosomal protein uL3 family. Part of the 50S ribosomal subunit. Forms a cluster with proteins L14 and L19.

In terms of biological role, one of the primary rRNA binding proteins, it binds directly near the 3'-end of the 23S rRNA, where it nucleates assembly of the 50S subunit. The protein is Large ribosomal subunit protein uL3 of Heliobacterium modesticaldum (strain ATCC 51547 / Ice1).